Consider the following 229-residue polypeptide: Orotidine 5'-phosphate decarboxylase (229 aa).

Substrate contacts are provided by residues aspartate 10, lysine 32, aspartate 59–threonine 68, threonine 119, arginine 180, glutamine 189, glycine 209, and arginine 210. Lysine 61 (proton donor) is an active-site residue.

Belongs to the OMP decarboxylase family. Type 1 subfamily. In terms of assembly, homodimer.

The enzyme catalyses orotidine 5'-phosphate + H(+) = UMP + CO2. The protein operates within pyrimidine metabolism; UMP biosynthesis via de novo pathway; UMP from orotate: step 2/2. In terms of biological role, catalyzes the decarboxylation of orotidine 5'-monophosphate (OMP) to uridine 5'-monophosphate (UMP). The sequence is that of Orotidine 5'-phosphate decarboxylase from Legionella pneumophila subsp. pneumophila (strain Philadelphia 1 / ATCC 33152 / DSM 7513).